The following is a 468-amino-acid chain: UDP-N-acetylmuramoyl-L-alanine--L-glutamate ligase (468 aa).

Residue 122 to 128 (GTKGKST) participates in ATP binding.

It belongs to the MurCDEF family. MurD2 subfamily.

It is found in the cytoplasm. The catalysed reaction is UDP-N-acetyl-alpha-D-muramoyl-L-alanine + L-glutamate + ATP = UDP-N-acetyl-alpha-D-muramoyl-L-alanyl-L-glutamate + ADP + phosphate + H(+). Its pathway is cell wall biogenesis; peptidoglycan biosynthesis. Its function is as follows. Cell wall formation. Catalyzes the addition of L-glutamate to the nucleotide precursor UDP-N-acetylmuramoyl-L-alanine. This is UDP-N-acetylmuramoyl-L-alanine--L-glutamate ligase from Xanthomonas axonopodis pv. citri (strain 306).